Consider the following 356-residue polypeptide: Phosphate acyltransferase (356 aa).

It belongs to the PlsX family. Homodimer. Probably interacts with PlsY.

It localises to the cytoplasm. The enzyme catalyses a fatty acyl-[ACP] + phosphate = an acyl phosphate + holo-[ACP]. Its pathway is lipid metabolism; phospholipid metabolism. Its function is as follows. Catalyzes the reversible formation of acyl-phosphate (acyl-PO(4)) from acyl-[acyl-carrier-protein] (acyl-ACP). This enzyme utilizes acyl-ACP as fatty acyl donor, but not acyl-CoA. The sequence is that of Phosphate acyltransferase from Mesorhizobium japonicum (strain LMG 29417 / CECT 9101 / MAFF 303099) (Mesorhizobium loti (strain MAFF 303099)).